The primary structure comprises 244 residues: ATP synthase subunit a (244 aa).

7 helical membrane passes run 17–37, 74–94, 112–132, 148–168, 171–191, 196–216, and 217–237; these read LSNV…AVLT, PFLA…MLGL, DPAI…YYGV, IPLL…TLGL, YGNI…ATNF, IALG…WQAF, and SLFV…VYIS.

The protein belongs to the ATPase A chain family. In terms of assembly, F-type ATPases have 2 components, CF(1) - the catalytic core - and CF(0) - the membrane proton channel. CF(1) has five subunits: alpha(3), beta(3), gamma(1), delta(1), epsilon(1). CF(0) has three main subunits: a(1), b(2) and c(9-12). The alpha and beta chains form an alternating ring which encloses part of the gamma chain. CF(1) is attached to CF(0) by a central stalk formed by the gamma and epsilon chains, while a peripheral stalk is formed by the delta and b chains.

It localises to the cell membrane. Functionally, key component of the proton channel; it plays a direct role in the translocation of protons across the membrane. This is ATP synthase subunit a from Bacillus pumilus (strain SAFR-032).